The chain runs to 215 residues: Ubiquitin-conjugating enzyme E2 S (215 aa).

Positions Asp9–Ser155 constitute a UBC core domain. The active-site Glycyl thioester intermediate is the Cys93. Residues Ile159 to Leu215 form a disordered region. Residues Ser161–Ser190 show a composition bias toward low complexity.

It belongs to the ubiquitin-conjugating enzyme family.

The enzyme catalyses S-ubiquitinyl-[E1 ubiquitin-activating enzyme]-L-cysteine + [E2 ubiquitin-conjugating enzyme]-L-cysteine = [E1 ubiquitin-activating enzyme]-L-cysteine + S-ubiquitinyl-[E2 ubiquitin-conjugating enzyme]-L-cysteine.. It participates in protein modification; protein ubiquitination. In terms of biological role, catalyzes the covalent attachment of ubiquitin to other proteins. Acts as an essential factor of the anaphase promoting complex/cyclosome (APC/C), a cell cycle-regulated ubiquitin ligase that controls progression through mitosis. Acts by specifically elongating polyubiquitin chains initiated by the E2 enzyme ubch10 on APC/C substrates, enhancing the degradation of APC/C substrates by the proteasome and promoting mitotic exit. This is Ubiquitin-conjugating enzyme E2 S (ube2s) from Dictyostelium discoideum (Social amoeba).